A 155-amino-acid chain; its full sequence is SsrA-binding protein (155 aa).

It belongs to the SmpB family.

Its subcellular location is the cytoplasm. Functionally, required for rescue of stalled ribosomes mediated by trans-translation. Binds to transfer-messenger RNA (tmRNA), required for stable association of tmRNA with ribosomes. tmRNA and SmpB together mimic tRNA shape, replacing the anticodon stem-loop with SmpB. tmRNA is encoded by the ssrA gene; the 2 termini fold to resemble tRNA(Ala) and it encodes a 'tag peptide', a short internal open reading frame. During trans-translation Ala-aminoacylated tmRNA acts like a tRNA, entering the A-site of stalled ribosomes, displacing the stalled mRNA. The ribosome then switches to translate the ORF on the tmRNA; the nascent peptide is terminated with the 'tag peptide' encoded by the tmRNA and targeted for degradation. The ribosome is freed to recommence translation, which seems to be the essential function of trans-translation. This is SsrA-binding protein from Oenococcus oeni (strain ATCC BAA-331 / PSU-1).